We begin with the raw amino-acid sequence, 388 residues long: Probable proton-coupled zinc antiporter SLC30A3 (388 aa).

Positions 1-41 (MEPSLATGGSETTRLVSARDRSSAGGGLRLKSLFTEPSEPL) are disordered. The Cytoplasmic portion of the chain corresponds to 1–75 (MEPSLATGGS…SPERVQARRQ (75 aa)). Serine 63 and serine 66 each carry phosphoserine. A helical transmembrane segment spans residues 76 to 96 (LYAACAVCFIFMAGEVVGGYL). Topologically, residues 97–105 (AHSLAIMTD) are lumenal. The helical transmembrane segment at 106-126 (AAHLLADIGSMLASLFSLWLS) threads the bilayer. Zn(2+) contacts are provided by histidine 108 and aspartate 112. The Cytoplasmic segment spans residues 127-145 (TRPATRTMTFGWHRSETLG). The helical transmembrane segment at 146–166 (ALASVVSLWIVTGILLYLAFL) threads the bilayer. Topologically, residues 167 to 177 (RLLHSDYHIEA) are lumenal. The helical transmembrane segment at 178–198 (GAMLLTASIAVCANLLMAFVL) threads the bilayer. At 199–235 (HQTGAPHSHGSTGAEYAPLEEGHGYPMSLGNTSVRAA) the chain is on the cytoplasmic side. Residues 236–256 (FVHVLGDLLQSFGVLAASILI) traverse the membrane as a helical segment. Zn(2+) is bound by residues histidine 238 and aspartate 242. The Lumenal portion of the chain corresponds to 257-263 (YFKPQYK). Residues 264–284 (VADPISTFLFSICALGSTAPT) traverse the membrane as a helical segment. Topologically, residues 285–388 (LRDVLLVLME…CLRCQEPSQA (104 aa)) are cytoplasmic.

It belongs to the cation diffusion facilitator (CDF) transporter (TC 2.A.4) family. SLC30A subfamily. In terms of assembly, homodimer. Homodimerization is negligible compared to the human protein. It could explain the lower efficiency of zinc transport. Interacts with TMEM163. In terms of tissue distribution, expression is restricted to brain (at protein level). In the brain, most abundant in hippocampus and cerebral cortex. The mRNA is also detected in testis, expression being restricted to germ cells and highest in pachytene spermatocytes and round spermatids.

The protein resides in the cytoplasmic vesicle. It is found in the secretory vesicle. It localises to the synaptic vesicle membrane. The protein localises to the synapse. Its subcellular location is the synaptosome. The protein resides in the late endosome membrane. It is found in the lysosome membrane. The catalysed reaction is Zn(2+)(in) + 2 H(+)(out) = Zn(2+)(out) + 2 H(+)(in). Functionally, probable proton-coupled zinc ion antiporter mediating the import of zinc from cytoplasm into synaptic vesicles and participating to cellular zinc ion homeostasis in the brain. The sequence is that of Probable proton-coupled zinc antiporter SLC30A3 from Mus musculus (Mouse).